Consider the following 88-residue polypeptide: Small ribosomal subunit protein bS20 (88 aa).

The tract at residues 1 to 28 is disordered; that stretch reads MANTVQARKRARQAVKQNEHNSSLRSKL.

This sequence belongs to the bacterial ribosomal protein bS20 family.

Its function is as follows. Binds directly to 16S ribosomal RNA. The sequence is that of Small ribosomal subunit protein bS20 from Polynucleobacter necessarius subsp. necessarius (strain STIR1).